Here is a 498-residue protein sequence, read N- to C-terminus: ATP synthase subunit beta, chloroplastic (498 aa).

172–179 (GGAGVGKT) provides a ligand contact to ATP.

Belongs to the ATPase alpha/beta chains family. F-type ATPases have 2 components, CF(1) - the catalytic core - and CF(0) - the membrane proton channel. CF(1) has five subunits: alpha(3), beta(3), gamma(1), delta(1), epsilon(1). CF(0) has four main subunits: a(1), b(1), b'(1) and c(9-12).

It localises to the plastid. The protein resides in the chloroplast thylakoid membrane. It catalyses the reaction ATP + H2O + 4 H(+)(in) = ADP + phosphate + 5 H(+)(out). Functionally, produces ATP from ADP in the presence of a proton gradient across the membrane. The catalytic sites are hosted primarily by the beta subunits. The polypeptide is ATP synthase subunit beta, chloroplastic (Liriodendron tulipifera (Tuliptree)).